A 393-amino-acid polypeptide reads, in one-letter code: S-adenosylmethionine synthase (393 aa).

E9 provides a ligand contact to Mg(2+). An ATP-binding site is contributed by H15. E43 serves as a coordination point for K(+). Residues E56 and Q99 each coordinate L-methionine. Residues 167 to 169 (DGK), 235 to 238 (SGRF), D246, 252 to 253 (RK), A269, K273, and K277 contribute to the ATP site. Residue D246 participates in L-methionine binding. Position 277 (K277) interacts with L-methionine.

Belongs to the AdoMet synthase family. As to quaternary structure, homotetramer. Requires Mn(2+) as cofactor. It depends on Mg(2+) as a cofactor. The cofactor is Co(2+). K(+) is required as a cofactor.

It is found in the cytoplasm. It catalyses the reaction L-methionine + ATP + H2O = S-adenosyl-L-methionine + phosphate + diphosphate. It functions in the pathway amino-acid biosynthesis; S-adenosyl-L-methionine biosynthesis; S-adenosyl-L-methionine from L-methionine: step 1/1. Functionally, catalyzes the formation of S-adenosylmethionine from methionine and ATP. The reaction comprises two steps that are both catalyzed by the same enzyme: formation of S-adenosylmethionine (AdoMet) and triphosphate, and subsequent hydrolysis of the triphosphate. This chain is S-adenosylmethionine synthase (SAM), found in Camellia sinensis (Tea plant).